The primary structure comprises 331 residues: NADH-quinone oxidoreductase subunit H (331 aa).

8 helical membrane passes run 7-27, 81-101, 114-134, 154-174, 187-207, 238-258, 271-291, and 310-330; these read ALVT…AVVI, MIFT…FAIV, IGIL…LFAG, ISYE…VGSF, VWFI…GVAV, FFVG…TLFF, WLSF…FILI, and VCLP…LAAA.

The protein belongs to the complex I subunit 1 family. NDH-1 is composed of 13 different subunits. Subunits NuoA, H, J, K, L, M, N constitute the membrane sector of the complex.

The protein resides in the cell inner membrane. It catalyses the reaction a quinone + NADH + 5 H(+)(in) = a quinol + NAD(+) + 4 H(+)(out). Its function is as follows. NDH-1 shuttles electrons from NADH, via FMN and iron-sulfur (Fe-S) centers, to quinones in the respiratory chain. The immediate electron acceptor for the enzyme in this species is believed to be ubiquinone. Couples the redox reaction to proton translocation (for every two electrons transferred, four hydrogen ions are translocated across the cytoplasmic membrane), and thus conserves the redox energy in a proton gradient. This subunit may bind ubiquinone. The polypeptide is NADH-quinone oxidoreductase subunit H (Pseudomonas paraeruginosa (strain DSM 24068 / PA7) (Pseudomonas aeruginosa (strain PA7))).